The chain runs to 367 residues: Pectate trisaccharide-lyase (367 aa).

Residues 1-27 form the signal peptide; the sequence is MLMRFSRVVSLVLLLVFTAVLTGAVKA. The Ca(2+) site is built by Asp144, Asp166, and Asp170. The PbH1 1 repeat unit spans residues 151–173; the sequence is SHHIWIDHCTFVNGNDGAVDIKK. Residue Arg224 is part of the active site. Residues 263–289 form a PbH1 2 repeat; sequence GAKVHVEGNYFMGYGAVMAEAGIAFLP.

Belongs to the polysaccharide lyase 1 family. In terms of assembly, homotetramer. Ca(2+) serves as cofactor.

Its subcellular location is the secreted. The catalysed reaction is eliminative cleavage of unsaturated trigalacturonate as the major product from the reducing end of polygalacturonic acid/pectate.. With respect to regulation, completely inactivated by EGTA. Cleaves unsaturated trigalacturonate from pectin. Activity is highest towards polygalacturonic acid, activity on methylated pectins decreases with an increasing degree of methylation. The polypeptide is Pectate trisaccharide-lyase (Thermotoga maritima (strain ATCC 43589 / DSM 3109 / JCM 10099 / NBRC 100826 / MSB8)).